Reading from the N-terminus, the 257-residue chain is Serine/arginine-rich splicing factor 1 (257 aa).

S2 bears the N-acetylserine mark. The RRM 1 domain maps to 16–91 (CRIYVGNLPP…YRLRVEFPRS (76 aa)). The segment at 88–116 (FPRSGRGTGRGGGGGGGGGAPRGRYGPPS) is disordered. The segment covering 93-108 (RGTGRGGGGGGGGGAP) has biased composition (gly residues). Positions 121 to 195 (YRVIVSGLPP…ETAYIRVKVD (75 aa)) constitute an RRM 2 domain.

The protein localises to the cytoplasm. The protein resides in the nucleus speckle. May play a role in preventing exon skipping, ensuring the accuracy of splicing and regulating alternative splicing. In Gallus gallus (Chicken), this protein is Serine/arginine-rich splicing factor 1 (SRSF1).